A 762-amino-acid chain; its full sequence is Polymeric immunoglobulin receptor (762 aa).

The N-terminal stretch at 1–18 is a signal peptide; the sequence is MTLFFLTCLLAVFPVVSM. One can recognise an Ig-like V-type 1; required for binding to polymeric IgA and IgM domain in the interval 19–120; that stretch reads KSPIFGPPEI…GVGINNRGLS (102 aa). The Extracellular portion of the chain corresponds to 19–636; that stretch reads KSPIFGPPEI…SSAGQGGSSK (618 aa). 2 disulfide bridges follow: Cys-40/Cys-110 and Cys-56/Cys-64. Residues Asn-83 and Asn-135 are each glycosylated (N-linked (GlcNAc...) asparagine). Ig-like V-type domains follow at residues 145–238, 251–351, 363–460, and 464–563; these read GGKV…DLHV, GSSV…ETTF, GGSV…LKIV, and PNLK…VYVA. 8 cysteine pairs are disulfide-bonded: Cys-152–Cys-221, Cys-258–Cys-324, Cys-272–Cys-280, Cys-370–Cys-443, Cys-384–Cys-394, Cys-484–Cys-546, Cys-488–Cys-522, and Cys-498–Cys-505. A glycan (N-linked (GlcNAc...) asparagine) is linked at Asn-291. Asn-423 is a glycosylation site (N-linked (GlcNAc...) asparagine). An N-linked (GlcNAc...) asparagine glycan is attached at Asn-530. The tract at residues 604 to 634 is disordered; the sequence is FVDTQAKDPEDAAGGSIASADPGSSAGQGGS. Residues 637–659 traverse the membrane as a helical segment; that stretch reads VVVSTLVPLALVLALGVLVVGVL. The Cytoplasmic segment spans residues 660 to 762; it reads RARHRKNVDR…ANIQDGPSKA (103 aa).

As to quaternary structure, interacts (mainly via CDR1-like domain) with dimeric IgA. Interacts (mainly via CDR2-like domain) with pentameric IgM. Either free or part of the secretory IgA (sIgA) complex that consists of two, four or five IgA monomers, and two additional non-Ig polypeptides, namely the JCHAIN and the secretory component (the proteolytic product of PIGR). Free secretory component interacts with bacterial antigens toxA of C.difficile and eae of E.coli. In terms of processing, N-glycosylated. Carries predominantly biantennary complex type glycans which are largely non-fucosylated. Sialylation with NeuAc is common, except for Asn-291 which carries exclusively high mannose glycans. N-glycans attached to Asn-83: Gal2GlcNAc2Man3GlcNAc2; Gal2GlcNAc2Man3GlcNAc2(Fuc); Gal1GlcNAc1Man4GlcNAc2(Fuc); Gal1GlcNAc1Man3GlcNAc2; Gal1GlcNAc1Man4GlcNAc2 and NeuAc1Gal2GlcNAc2Man3GlcNAc2. N-glycans attached to Asn-135: Gal2GlcNAc2Man3GlcNAc2; Gal1GlcNAc1Man3GlcNAc2 and NeuAc1Gal2GlcNAc2Man3GlcNAc2. N-glycans attached to Asn-291: Man5-8GlcNAc2. N-glycans attached to Asn-423: NeuAc1Gal2GlcNAc2Man3GlcNAc2. N-glycans attached to Asn-530: Gal2GlcNAc2Man3GlcNAc2; Gal1GlcNAc1Man3GlcNAc2 and NeuAc1Gal2GlcNAc2Man3GlcNAc2. N-glycosylation is required for anchoring IgA molecules to mucus but is not necessary for Ig binding.

The protein resides in the cell membrane. The protein localises to the secreted. Mediates selective transcytosis of polymeric IgA and IgM across mucosal epithelial cells. Binds polymeric IgA and IgM at the basolateral surface of epithelial cells. The complex is then transported across the cell to be secreted at the apical surface. During this process, a cleavage occurs that separates the extracellular (known as the secretory component) from the transmembrane segment. Functionally, through its N-linked glycans ensures anchoring of secretory IgA (sIgA) molecules to mucus lining the epithelial surface to neutralize extracellular pathogens. On its own (free form) may act as a non-specific microbial scavenger to prevent pathogen interaction with epithelial cells. This chain is Polymeric immunoglobulin receptor (PIGR), found in Equus asinus (Donkey).